A 785-amino-acid polypeptide reads, in one-letter code: MNNKILKILEFGEITDRLGALAITSPAKERAEKLLPSSDFDQVQNDIKQTLALTNLLRIKGQLPLTNFKDVRPSTKRLGVKANLNAQELGNLLLVLSLAQEINEFLEDVDEKVDLTIIDPILDQLDVPDLLFRELKKSIDYDGEVLDTASSELARLRHDIASNEEDIKNRMTTYTKGNSSKYLSEQIVTIRDDRYVIPVKQEYRAKFGGVVHDQSASGQTLFVEPEAVLNLNNRQQNLIAKEKQEIRNILKHLSNIAREDIDSLNNIASALTSLDFLQAKAKLAKEMKASEPKLTKDHSLNLRNARHPLINPEKVVPNNIRLGGDFDTMLITGPNTGGKTITLKTAGLLQLMAQSGLFIPAEEDSQVGVFEQIYADIGDEQSIEQSLSTFSSHMNDIIAIMKNVNSETLVLIDEIGAGTDPEEGASLAISILDFLRKKDAKIMVTTHYPELKLYGYNRPRTTNASMEFDLKTLSPTYRLQIGIPGHSNAFAIARRLGMREDVVKNAQELMSDEDSDINKMIAKLNAQTKAATTARNRLETSLDRSQKLEQKLQQALDWYNQRVQKQLDFAQERANEIIAKRRKKADKIIEQLEQQKNVGIKENKIIEAKGELNSLERQANNLAHNKVLQREKRRHHVSIGDRVKVLSYGQTGTITKQLSEHEYEVQMGIIKVKVSDRDVERIDNSQSTAKPKRLVRATSAVRRSNAHSELDLRGQRYDEAMTNLDRYIDSVLLAGLDTVTIIHGIGTGAIRKGVWQYLRSSNHVKNFNYAPANEGGNGATIVQLK.

Residue Gly-333–Thr-340 participates in ATP binding. The Smr domain maps to Leu-710–Lys-785.

It belongs to the DNA mismatch repair MutS family. MutS2 subfamily. As to quaternary structure, homodimer. Binds to stalled ribosomes, contacting rRNA.

Endonuclease that is involved in the suppression of homologous recombination and thus may have a key role in the control of bacterial genetic diversity. Its function is as follows. Acts as a ribosome collision sensor, splitting the ribosome into its 2 subunits. Detects stalled/collided 70S ribosomes which it binds and splits by an ATP-hydrolysis driven conformational change. Acts upstream of the ribosome quality control system (RQC), a ribosome-associated complex that mediates the extraction of incompletely synthesized nascent chains from stalled ribosomes and their subsequent degradation. Probably generates substrates for RQC. In Lactobacillus acidophilus (strain ATCC 700396 / NCK56 / N2 / NCFM), this protein is Endonuclease MutS2.